Here is a 217-residue protein sequence, read N- to C-terminus: ATP-dependent Clp protease proteolytic subunit (217 aa).

The Nucleophile role is filled by Ser119. The active site involves His144.

The protein belongs to the peptidase S14 family. Fourteen ClpP subunits assemble into 2 heptameric rings which stack back to back to give a disk-like structure with a central cavity, resembling the structure of eukaryotic proteasomes.

It is found in the cytoplasm. It catalyses the reaction Hydrolysis of proteins to small peptides in the presence of ATP and magnesium. alpha-casein is the usual test substrate. In the absence of ATP, only oligopeptides shorter than five residues are hydrolyzed (such as succinyl-Leu-Tyr-|-NHMec, and Leu-Tyr-Leu-|-Tyr-Trp, in which cleavage of the -Tyr-|-Leu- and -Tyr-|-Trp bonds also occurs).. Cleaves peptides in various proteins in a process that requires ATP hydrolysis. Has a chymotrypsin-like activity. Plays a major role in the degradation of misfolded proteins. In Bordetella bronchiseptica (strain ATCC BAA-588 / NCTC 13252 / RB50) (Alcaligenes bronchisepticus), this protein is ATP-dependent Clp protease proteolytic subunit.